Consider the following 120-residue polypeptide: NAD(P)H-quinone oxidoreductase subunit 3 (120 aa).

A run of 3 helical transmembrane segments spans residues 6 to 26 (GYDA…LALV), 64 to 84 (MFAL…PWAV), and 89 to 109 (LGLL…VALA).

It belongs to the complex I subunit 3 family. In terms of assembly, NDH-1 can be composed of about 15 different subunits; different subcomplexes with different compositions have been identified which probably have different functions.

It is found in the cellular thylakoid membrane. The catalysed reaction is a plastoquinone + NADH + (n+1) H(+)(in) = a plastoquinol + NAD(+) + n H(+)(out). It carries out the reaction a plastoquinone + NADPH + (n+1) H(+)(in) = a plastoquinol + NADP(+) + n H(+)(out). Its function is as follows. NDH-1 shuttles electrons from an unknown electron donor, via FMN and iron-sulfur (Fe-S) centers, to quinones in the respiratory and/or the photosynthetic chain. The immediate electron acceptor for the enzyme in this species is believed to be plastoquinone. Couples the redox reaction to proton translocation, and thus conserves the redox energy in a proton gradient. Cyanobacterial NDH-1 also plays a role in inorganic carbon-concentration. The chain is NAD(P)H-quinone oxidoreductase subunit 3 from Prochlorococcus marinus (strain MIT 9211).